The chain runs to 1448 residues: Glutamate receptor ionotropic, NMDA 2B (1448 aa).

The first 24 residues, 1 to 24, serve as a signal peptide directing secretion; sequence MRPTEACCYLKISLIILFYMGCYA. The Extracellular portion of the chain corresponds to 25-554; that stretch reads QKHPNMDIAV…SAFLEPFSAD (530 aa). Cysteines 81 and 316 form a disulfide. 2 residues coordinate Zn(2+): His122 and Glu279. The N-linked (GlcNAc...) asparagine glycan is linked to Asn336. 2 disulfide bridges follow: Cys426/Cys453 and Cys433/Cys454. The L-glutamate site is built by Thr511 and Arg516. The chain crosses the membrane as a helical span at residues 555 to 573; that stretch reads VWVMMFVMLLIVSAVAVFV. Residues 574–600 lie on the Cytoplasmic side of the membrane; it reads FEYFSPVGYNRCLADGREPGGPSFTIG. The segment at residues 601–620 is an intramembrane region (discontinuously helical); sequence KAIWLLWGLVFNNSVPVQNP. Positions 601–620 are pore-forming; it reads KAIWLLWGLVFNNSVPVQNP. Residues 621-627 are Cytoplasmic-facing; that stretch reads KGTTSKI. The helical transmembrane segment at 628-643 threads the bilayer; that stretch reads MVSVWAFFAVIFLASY. The Extracellular segment spans residues 644–819; the sequence is TANLAAFMIQ…LDIDNMAGVF (176 aa). Asn685 carries an N-linked (GlcNAc...) asparagine glycan. Residues 687-688 and Asp729 each bind L-glutamate; that span reads ST. Cys743 and Cys798 are disulfide-bonded. Residues 820–839 traverse the membrane as a helical segment; it reads YMLAAAMALSLITFIMEHLF. The Cytoplasmic segment spans residues 840–1448; it reads FWQLRHCFMG…EKLSSIESDV (609 aa). The span at 1254–1265 shows a compositional bias: polar residues; the sequence is APNSKYPQSPNG. The tract at residues 1254 to 1277 is disordered; the sequence is APNSKYPQSPNGKAQKRNRSKLHR. Positions 1267 to 1277 are enriched in basic residues; the sequence is AQKRNRSKLHR.

The protein belongs to the glutamate-gated ion channel (TC 1.A.10.1) family. NR2B/GRIN2B subfamily. Heterotetramer. Forms heterotetrameric channels composed of two GluN1/zeta subunits (GRIN1), and two identical GluN2/epsilon subunits (GRIN2A, GRIN2B, GRIN2C or GRIN2D) or GluN3 subunits (GRIN3A or GRIN3B) (in vitro). In vivo, the subunit composition may depend on the expression levels of the different subunits. As to expression, detected in oocytes.

The protein resides in the cell membrane. It localises to the postsynaptic cell membrane. It catalyses the reaction Ca(2+)(in) = Ca(2+)(out). The enzyme catalyses Na(+)(in) = Na(+)(out). The catalysed reaction is K(+)(in) = K(+)(out). Its function is as follows. Component of N-methyl-D-aspartate (NMDA) receptors (NMDARs) that function as heterotetrameric, ligand-gated cation channels with high calcium permeability and voltage-dependent block by Mg(2+). Channel activation requires binding of the neurotransmitter L-glutamate to the GluN2 subunit, glycine binding to the GluN1 subunit, plus membrane depolarization to eliminate channel inhibition by Mg(2+). NMDARs mediate simultaneously the potasium efflux and the influx of calcium and sodium. Each GluN2 subunit confers differential attributes to channel properties, including activation, deactivation and desensitization kinetics, pH sensitivity, Ca2(+) permeability, and binding to allosteric modulators. This chain is Glutamate receptor ionotropic, NMDA 2B, found in Xenopus laevis (African clawed frog).